We begin with the raw amino-acid sequence, 433 residues long: Probable beta-1,3-galactosyl-O-glycosyl-glycoprotein beta-1,6-N-acetylglucosaminyltransferase 7 (433 aa).

Residues 1 to 8 (MSQLRTTK) lie on the Cytoplasmic side of the membrane. A helical; Signal-anchor for type II membrane protein transmembrane segment spans residues 9-25 (AGLVACGMICAFIFLYL). Residues 26 to 433 (RNPGPEEAEA…QSHFNSQPHH (408 aa)) lie on the Extracellular side of the membrane. 4 disulfides stabilise this stretch: C57–C209, C143–C358, C164–C191, and C367–C398. The N-linked (GlcNAc...) asparagine glycan is linked to N112. Residues 233 to 275 (NITPGVTPPANSKPKTGQGPPKPSPDENSYTAPNTIFKQSPPH) are disordered. Over residues 258–275 (DENSYTAPNTIFKQSPPH) the composition is skewed to polar residues. Residues 413-433 (VPPEPHWQFPQQSHFNSQPHH) are disordered. Polar residues predominate over residues 421 to 433 (FPQQSHFNSQPHH).

The protein belongs to the glycosyltransferase 14 family.

Its subcellular location is the golgi apparatus membrane. It participates in protein modification; protein glycosylation. Probable glycosyltransferase. In Mus musculus (Mouse), this protein is Probable beta-1,3-galactosyl-O-glycosyl-glycoprotein beta-1,6-N-acetylglucosaminyltransferase 7.